A 49-amino-acid polypeptide reads, in one-letter code: MAKFPEAEARIFNKLICMKCNARNPPDATKCRKCGYKGLRPKAREPRGG.

The protein belongs to the eukaryotic ribosomal protein eL40 family.

This is Large ribosomal subunit protein eL40 from Methanopyrus kandleri (strain AV19 / DSM 6324 / JCM 9639 / NBRC 100938).